We begin with the raw amino-acid sequence, 717 residues long: Ribosomal RNA large subunit methyltransferase K/L (717 aa).

The THUMP domain maps to 44-155 (DAYKVCIYSY…KQFVNVFLCL (112 aa)).

Belongs to the methyltransferase superfamily. RlmKL family.

It is found in the cytoplasm. It carries out the reaction guanosine(2445) in 23S rRNA + S-adenosyl-L-methionine = N(2)-methylguanosine(2445) in 23S rRNA + S-adenosyl-L-homocysteine + H(+). It catalyses the reaction guanosine(2069) in 23S rRNA + S-adenosyl-L-methionine = N(2)-methylguanosine(2069) in 23S rRNA + S-adenosyl-L-homocysteine + H(+). Its function is as follows. Specifically methylates the guanine in position 2445 (m2G2445) and the guanine in position 2069 (m7G2069) of 23S rRNA. This Francisella tularensis subsp. tularensis (strain WY96-3418) protein is Ribosomal RNA large subunit methyltransferase K/L.